The following is a 163-amino-acid chain: 3-isopropylmalate dehydratase small subunit (163 aa).

Belongs to the LeuD family. LeuD type 2 subfamily. Heterodimer of LeuC and LeuD.

It catalyses the reaction (2R,3S)-3-isopropylmalate = (2S)-2-isopropylmalate. The protein operates within amino-acid biosynthesis; L-leucine biosynthesis; L-leucine from 3-methyl-2-oxobutanoate: step 2/4. Its function is as follows. Catalyzes the isomerization between 2-isopropylmalate and 3-isopropylmalate, via the formation of 2-isopropylmaleate. The chain is 3-isopropylmalate dehydratase small subunit from Thermococcus kodakarensis (strain ATCC BAA-918 / JCM 12380 / KOD1) (Pyrococcus kodakaraensis (strain KOD1)).